A 21-amino-acid chain; its full sequence is Neuropeptide gamma (21 aa).

A disordered region spans residues 1-21 (SSANPQITRKRHKINSFVGLM). M21 is modified (methionine amide).

This sequence belongs to the tachykinin family.

Its subcellular location is the secreted. Tachykinins are active peptides which excite neurons, evoke behavioral responses, and contract (directly or indirectly) many smooth muscles. Is a potent vasoconstrictor and secretagogue that plays a regulatory role in the central control of ventilation, in particular, the heart rate variability (HRV). The chain is Neuropeptide gamma from Oncorhynchus mykiss (Rainbow trout).